A 74-amino-acid polypeptide reads, in one-letter code: Large ribosomal subunit protein bL31 (74 aa).

Zn(2+)-binding residues include Cys16, Cys18, Cys38, and Cys41.

Belongs to the bacterial ribosomal protein bL31 family. Type A subfamily. Part of the 50S ribosomal subunit. Zn(2+) is required as a cofactor.

Binds the 23S rRNA. This chain is Large ribosomal subunit protein bL31 (rpmE), found in Streptomyces coelicolor (strain ATCC BAA-471 / A3(2) / M145).